We begin with the raw amino-acid sequence, 472 residues long: Adenosylhomocysteinase (472 aa).

Substrate-binding residues include Thr62, Asp137, and Glu197. 198-200 (TTT) provides a ligand contact to NAD(+). Residues Lys227 and Asp231 each contribute to the substrate site. Residues Asn232, 261–266 (GYGDVG), Glu284, Asn319, 340–342 (IGH), and Asn385 contribute to the NAD(+) site.

The protein belongs to the adenosylhomocysteinase family. The cofactor is NAD(+).

The protein resides in the cytoplasm. The catalysed reaction is S-adenosyl-L-homocysteine + H2O = L-homocysteine + adenosine. Its pathway is amino-acid biosynthesis; L-homocysteine biosynthesis; L-homocysteine from S-adenosyl-L-homocysteine: step 1/1. In terms of biological role, may play a key role in the regulation of the intracellular concentration of adenosylhomocysteine. This is Adenosylhomocysteinase from Bordetella bronchiseptica (strain ATCC BAA-588 / NCTC 13252 / RB50) (Alcaligenes bronchisepticus).